The following is a 960-amino-acid chain: Serine/threonine-protein kinase atg1 (960 aa).

The Protein kinase domain maps to 22–327; it reads YTRLDEIGRG…FPEFFSNNVI (306 aa). ATP contacts are provided by residues 28 to 36 and Lys-51; that span reads IGRGSFATV. Residue Asp-165 is the Proton acceptor of the active site. Disordered regions lie at residues 333–467, 503–538, 550–571, 673–694, 789–815, and 926–960; these read GLLA…RAQE, PRLQ…PHAN, ARAD…QSPT, SAST…SADS, RLPP…TADV, and AKRS…TPPR. 2 stretches are compositionally biased toward polar residues: residues 376–388 and 520–536; these read PVTT…TPPT and RRTT…SSPH. Residues 550 to 566 are compositionally biased toward basic and acidic residues; it reads ARADSTHQRQHSYERRY. The segment covering 789-800 has biased composition (basic and acidic residues); the sequence is RLPPDHPSHPDN. Residues 801–815 are compositionally biased toward low complexity; that stretch reads HSISSTAGSSSTADV. Polar residues predominate over residues 930 to 951; that stretch reads SAPTPTAGSAGKTPTSNISPVT.

It belongs to the protein kinase superfamily. Ser/Thr protein kinase family. APG1/unc-51/ULK1 subfamily. As to quaternary structure, homodimer. Forms a ternary complex with ATG13 and ATG17.

The protein localises to the cytoplasm. The protein resides in the preautophagosomal structure membrane. The enzyme catalyses L-seryl-[protein] + ATP = O-phospho-L-seryl-[protein] + ADP + H(+). It carries out the reaction L-threonyl-[protein] + ATP = O-phospho-L-threonyl-[protein] + ADP + H(+). Its function is as follows. Serine/threonine protein kinase involved in the cytoplasm to vacuole transport (Cvt) and found to be essential in autophagy, where it is required for the formation of autophagosomes. Involved in the clearance of protein aggregates which cannot be efficiently cleared by the proteasome. Required for selective autophagic degradation of the nucleus (nucleophagy) as well as for mitophagy which contributes to regulate mitochondrial quantity and quality by eliminating the mitochondria to a basal level to fulfill cellular energy requirements and preventing excess ROS production. Also involved in endoplasmic reticulum-specific autophagic process, in selective removal of ER-associated degradation (ERAD) substrates. Plays a key role in ATG9 and ATG23 cycling through the pre-autophagosomal structure and is necessary to promote ATG18 binding to ATG9 through phosphorylation of ATG9. Catalyzes phosphorylation of ATG4, decreasing the interaction between ATG4 and ATG8 and impairing deconjugation of PE-conjugated forms of ATG8. The polypeptide is Serine/threonine-protein kinase atg1 (Penicillium rubens (strain ATCC 28089 / DSM 1075 / NRRL 1951 / Wisconsin 54-1255) (Penicillium chrysogenum)).